The following is a 199-amino-acid chain: N-(5'-phosphoribosyl)anthranilate isomerase (199 aa).

This sequence belongs to the TrpF family.

The enzyme catalyses N-(5-phospho-beta-D-ribosyl)anthranilate = 1-(2-carboxyphenylamino)-1-deoxy-D-ribulose 5-phosphate. It functions in the pathway amino-acid biosynthesis; L-tryptophan biosynthesis; L-tryptophan from chorismate: step 3/5. The protein is N-(5'-phosphoribosyl)anthranilate isomerase of Streptococcus pneumoniae serotype 19F (strain G54).